Consider the following 124-residue polypeptide: MARVKRGVTTRARHKKVIKLAKGYRGRSKNCYRIALQRVEKALQYAYRDRRNRKRFFRSLWIMRINAAARQHGLLYSDFIHGLSLANITLNRKVLADMAVNNQDNFKQIVDITKEALTKSRVAQ.

This sequence belongs to the bacterial ribosomal protein bL20 family.

In terms of biological role, binds directly to 23S ribosomal RNA and is necessary for the in vitro assembly process of the 50S ribosomal subunit. It is not involved in the protein synthesizing functions of that subunit. The polypeptide is Large ribosomal subunit protein bL20 (Ehrlichia canis (strain Jake)).